A 137-amino-acid chain; its full sequence is Small ribosomal subunit protein uS12 (137 aa).

2 disordered regions span residues 1 to 21 (MPTI…KSDS) and 34 to 57 (VHTK…TPKK). Residue D102 is modified to 3-methylthioaspartic acid.

Belongs to the universal ribosomal protein uS12 family. In terms of assembly, part of the 30S ribosomal subunit. Contacts proteins S8 and S17. May interact with IF1 in the 30S initiation complex.

In terms of biological role, with S4 and S5 plays an important role in translational accuracy. Its function is as follows. Interacts with and stabilizes bases of the 16S rRNA that are involved in tRNA selection in the A site and with the mRNA backbone. Located at the interface of the 30S and 50S subunits, it traverses the body of the 30S subunit contacting proteins on the other side and probably holding the rRNA structure together. The combined cluster of proteins S8, S12 and S17 appears to hold together the shoulder and platform of the 30S subunit. The chain is Small ribosomal subunit protein uS12 from Streptococcus equi subsp. zooepidemicus (strain H70).